The chain runs to 462 residues: Fez family zinc finger protein 1 (462 aa).

The Engrailed homology 1 repressor signature appears at 34–49 (PLAFSIERIMSRTPEP). C2H2-type zinc fingers lie at residues 260 to 282 (FTCE…MPVH), 288 to 310 (FVCK…KIIH), 316 to 338 (HKCN…TRIH), 344 to 366 (FVCE…KLTH), 372 to 394 (FKCN…MHTH), and 400 to 423 (FTCP…RKLH). A disordered region spans residues 441–462 (LLLPNREPSPTIQSPQLQKSGY). Positions 448–462 (PSPTIQSPQLQKSGY) are enriched in polar residues.

This sequence belongs to the krueppel C2H2-type zinc-finger protein family.

The protein localises to the nucleus. Its function is as follows. Transcription repressor. Involved in the development of the forebrain region. This Xenopus tropicalis (Western clawed frog) protein is Fez family zinc finger protein 1 (fezf1).